Reading from the N-terminus, the 323-residue chain is tRNA-cytidine(32) 2-sulfurtransferase (323 aa).

The PP-loop motif signature appears at 49 to 54 (SGGKDS). The [4Fe-4S] cluster site is built by cysteine 124, cysteine 127, and cysteine 215.

Belongs to the TtcA family. As to quaternary structure, homodimer. The cofactor is Mg(2+). [4Fe-4S] cluster is required as a cofactor.

It is found in the cytoplasm. The enzyme catalyses cytidine(32) in tRNA + S-sulfanyl-L-cysteinyl-[cysteine desulfurase] + AH2 + ATP = 2-thiocytidine(32) in tRNA + L-cysteinyl-[cysteine desulfurase] + A + AMP + diphosphate + H(+). Its pathway is tRNA modification. Functionally, catalyzes the ATP-dependent 2-thiolation of cytidine in position 32 of tRNA, to form 2-thiocytidine (s(2)C32). The sulfur atoms are provided by the cysteine/cysteine desulfurase (IscS) system. The chain is tRNA-cytidine(32) 2-sulfurtransferase from Shewanella denitrificans (strain OS217 / ATCC BAA-1090 / DSM 15013).